Consider the following 261-residue polypeptide: MTHQTHAYHMVNPSPWPLTGALSALLMTSGLIMWFHFNSVALLTLGLTTNMLTMYQWWRDVIRESTFQGHHTPNVQKGLRYGMILFIISEVLFFTGFFWAFYHSSLAPTPELGGCWPPTGIHPLNPLEVPLLNTSVLLASGVSITWAHHSLMEGNRNHMLQALFITIALGVYFTLLQASEYYEAPFTISDGVYGSTFFVATGFHGLHVIIGSTFLIVCFFRQLKFHFTSSHHFGFEAAAWYWHFVDVVWLFLYVSIYWWGS.

Over 1 to 15 (MTHQTHAYHMVNPSP) the chain is Mitochondrial matrix. Residues 16–34 (WPLTGALSALLMTSGLIMW) form a helical membrane-spanning segment. Residues 35-40 (FHFNSV) are Mitochondrial intermembrane-facing. A helical membrane pass occupies residues 41-66 (ALLTLGLTTNMLTMYQWWRDVIREST). Topologically, residues 67–72 (FQGHHT) are mitochondrial matrix. A helical transmembrane segment spans residues 73 to 105 (PNVQKGLRYGMILFIISEVLFFTGFFWAFYHSS). The Mitochondrial intermembrane portion of the chain corresponds to 106-128 (LAPTPELGGCWPPTGIHPLNPLE). A helical transmembrane segment spans residues 129–152 (VPLLNTSVLLASGVSITWAHHSLM). Over 153–155 (EGN) the chain is Mitochondrial matrix. A helical transmembrane segment spans residues 156–183 (RNHMLQALFITIALGVYFTLLQASEYYE). At 184–190 (APFTISD) the chain is on the mitochondrial intermembrane side. The chain crosses the membrane as a helical span at residues 191 to 223 (GVYGSTFFVATGFHGLHVIIGSTFLIVCFFRQL). Over 224–232 (KFHFTSSHH) the chain is Mitochondrial matrix. The chain crosses the membrane as a helical span at residues 233 to 256 (FGFEAAAWYWHFVDVVWLFLYVSI). Residues 257–261 (YWWGS) are Mitochondrial intermembrane-facing.

It belongs to the cytochrome c oxidase subunit 3 family. In terms of assembly, component of the cytochrome c oxidase (complex IV, CIV), a multisubunit enzyme composed of 14 subunits. The complex is composed of a catalytic core of 3 subunits MT-CO1, MT-CO2 and MT-CO3, encoded in the mitochondrial DNA, and 11 supernumerary subunits COX4I, COX5A, COX5B, COX6A, COX6B, COX6C, COX7A, COX7B, COX7C, COX8 and NDUFA4, which are encoded in the nuclear genome. The complex exists as a monomer or a dimer and forms supercomplexes (SCs) in the inner mitochondrial membrane with NADH-ubiquinone oxidoreductase (complex I, CI) and ubiquinol-cytochrome c oxidoreductase (cytochrome b-c1 complex, complex III, CIII), resulting in different assemblies (supercomplex SCI(1)III(2)IV(1) and megacomplex MCI(2)III(2)IV(2)).

It is found in the mitochondrion inner membrane. It catalyses the reaction 4 Fe(II)-[cytochrome c] + O2 + 8 H(+)(in) = 4 Fe(III)-[cytochrome c] + 2 H2O + 4 H(+)(out). Functionally, component of the cytochrome c oxidase, the last enzyme in the mitochondrial electron transport chain which drives oxidative phosphorylation. The respiratory chain contains 3 multisubunit complexes succinate dehydrogenase (complex II, CII), ubiquinol-cytochrome c oxidoreductase (cytochrome b-c1 complex, complex III, CIII) and cytochrome c oxidase (complex IV, CIV), that cooperate to transfer electrons derived from NADH and succinate to molecular oxygen, creating an electrochemical gradient over the inner membrane that drives transmembrane transport and the ATP synthase. Cytochrome c oxidase is the component of the respiratory chain that catalyzes the reduction of oxygen to water. Electrons originating from reduced cytochrome c in the intermembrane space (IMS) are transferred via the dinuclear copper A center (CU(A)) of subunit 2 and heme A of subunit 1 to the active site in subunit 1, a binuclear center (BNC) formed by heme A3 and copper B (CU(B)). The BNC reduces molecular oxygen to 2 water molecules using 4 electrons from cytochrome c in the IMS and 4 protons from the mitochondrial matrix. The chain is Cytochrome c oxidase subunit 3 (MT-CO3) from Nanger dama (Dama gazelle).